Reading from the N-terminus, the 203-residue chain is RNA annealing protein YRA2 (203 aa).

The residue at position 1 (Met1) is an N-acetylmethionine. 2 disordered regions span residues 1 to 60 and 134 to 203; these read MDKA…REEP and EIYQ…YMKG. Residues 11 to 20 are compositionally biased toward polar residues; that stretch reads NSHTDSSSNH. Residues 47 to 60 show a composition bias toward basic and acidic residues; it reads SRSKDRLYREREEP. Residues 64–138 form the RRM domain; it reads KRIRISKIPL…AKIEVEIYQP (75 aa). Basic residues-rich tracts occupy residues 139 to 153 and 163 to 180; these read QRKH…RRKQ and PGSH…KNKG.

This sequence belongs to the YRA1 family. As to quaternary structure, associates with mRNPs. Interacts with YRA1.

It is found in the nucleus. Functionally, involved in export of poly(A) mRNAs from the nucleus. Recruited to the coding sequences as well as poly-A sites of active genes. In Saccharomyces cerevisiae (strain RM11-1a) (Baker's yeast), this protein is RNA annealing protein YRA2 (YRA2).